A 395-amino-acid polypeptide reads, in one-letter code: Probable peptidoglycan glycosyltransferase FtsW (395 aa).

Residues methionine 1–arginine 24 are Cytoplasmic-facing. A helical membrane pass occupies residues leucine 25–isoleucine 45. Over serine 46–glutamine 62 the chain is Periplasmic. Residues isoleucine 63–threonine 83 traverse the membrane as a helical segment. Residues tryptophan 84 to arginine 86 are Cytoplasmic-facing. The chain crosses the membrane as a helical span at residues alanine 87–valine 107. Topologically, residues glycine 108–arginine 116 are periplasmic. A helical transmembrane segment spans residues tryptophan 117 to leucine 137. Topologically, residues tyrosine 138–threonine 152 are cytoplasmic. Residues serine 153–leucine 173 traverse the membrane as a helical segment. Residues glutamine 174–glycine 178 are Periplasmic-facing. Residues threonine 179–tryptophan 199 form a helical membrane-spanning segment. Position 200 (arginine 200) is a topological domain, cytoplasmic. Residues phenylalanine 201–tyrosine 221 form a helical membrane-spanning segment. Residues arginine 222 to aspartate 276 lie on the Periplasmic side of the membrane. A helical membrane pass occupies residues phenylalanine 277 to leucine 297. The Cytoplasmic portion of the chain corresponds to phenylalanine 298–arginine 316. Residues leucine 317–isoleucine 337 traverse the membrane as a helical segment. The Periplasmic portion of the chain corresponds to asparagine 338–threonine 352. The chain crosses the membrane as a helical span at residues leucine 353–leucine 373. Residues leucine 374–serine 395 lie on the Cytoplasmic side of the membrane.

It belongs to the SEDS family. FtsW subfamily.

The protein localises to the cell inner membrane. It carries out the reaction [GlcNAc-(1-&gt;4)-Mur2Ac(oyl-L-Ala-gamma-D-Glu-L-Lys-D-Ala-D-Ala)](n)-di-trans,octa-cis-undecaprenyl diphosphate + beta-D-GlcNAc-(1-&gt;4)-Mur2Ac(oyl-L-Ala-gamma-D-Glu-L-Lys-D-Ala-D-Ala)-di-trans,octa-cis-undecaprenyl diphosphate = [GlcNAc-(1-&gt;4)-Mur2Ac(oyl-L-Ala-gamma-D-Glu-L-Lys-D-Ala-D-Ala)](n+1)-di-trans,octa-cis-undecaprenyl diphosphate + di-trans,octa-cis-undecaprenyl diphosphate + H(+). The protein operates within cell wall biogenesis; peptidoglycan biosynthesis. Its function is as follows. Peptidoglycan polymerase that is essential for cell division. This chain is Probable peptidoglycan glycosyltransferase FtsW, found in Halorhodospira halophila (strain DSM 244 / SL1) (Ectothiorhodospira halophila (strain DSM 244 / SL1)).